We begin with the raw amino-acid sequence, 393 residues long: Diphosphomevalonate decarboxylase (393 aa).

(R)-5-diphosphomevalonate contacts are provided by residues 21–24 (YWGK), R77, 156–161 (SGSACR), and T212.

This sequence belongs to the diphosphomevalonate decarboxylase family. As to quaternary structure, homodimer.

It localises to the cytoplasm. The protein localises to the nucleus. The enzyme catalyses (R)-5-diphosphomevalonate + ATP = isopentenyl diphosphate + ADP + phosphate + CO2. The protein operates within isoprenoid biosynthesis; isopentenyl diphosphate biosynthesis via mevalonate pathway; isopentenyl diphosphate from (R)-mevalonate: step 3/3. Its function is as follows. Diphosphomevalonate decarboxylase; part of the second module of ergosterol biosynthesis pathway that includes the middle steps of the pathway. Mvd1 converts diphosphomevalonate into isopentenyl diphosphate. The second module is carried out in the vacuole and involves the formation of farnesyl diphosphate, which is also an important intermediate in the biosynthesis of ubiquinone, dolichol, heme and prenylated proteins. Activity by the mevalonate kinase erg12 first converts mevalonate into 5-phosphomevalonate. 5-phosphomevalonate is then further converted to 5-diphosphomevalonate by the phosphomevalonate kinase erg8. The diphosphomevalonate decarboxylase mvd1 then produces isopentenyl diphosphate. The isopentenyl-diphosphate delta-isomerase idi1 then catalyzes the 1,3-allylic rearrangement of the homoallylic substrate isopentenyl (IPP) to its highly electrophilic allylic isomer, dimethylallyl diphosphate (DMAPP). Finally the farnesyl diphosphate synthase fps1 catalyzes the sequential condensation of isopentenyl pyrophosphate with dimethylallyl pyrophosphate, and then with the resultant geranylpyrophosphate to the ultimate product farnesyl pyrophosphate. The protein is Diphosphomevalonate decarboxylase (mvd1) of Schizosaccharomyces pombe (strain 972 / ATCC 24843) (Fission yeast).